A 2867-amino-acid chain; its full sequence is Reticulocyte-binding protein 2 (2867 aa).

A signal peptide spans 1 to 21 (MEKNVLWVIFYNFLVILLASC). Topologically, residues 22 to 2805 (NDSNRSKSNS…TAKEAIGKTR (2784 aa)) are extracellular. 3 disordered regions span residues 52–73 (KYNNAKTEDNIGNQINNDNNHN), 2650–2682 (ETKTSPSGMKAKEEKVPPKETENRAQDNLASVP), and 2712–2799 (DNTH…TAKE). Positions 61-73 (NIGNQINNDNNHN) are enriched in low complexity. Residues 2659-2674 (KAKEEKVPPKETENRA) are compositionally biased toward basic and acidic residues. The span at 2725–2736 (DSISAPQEQVEY) shows a compositional bias: polar residues. Over residues 2743 to 2754 (ENDETTEEESEH) the composition is skewed to acidic residues. Positions 2755-2799 (DDAHDDTHDDTHDDTHDDTHDDTHDDTHDDTHDESQTGRDSTAKE) are enriched in basic and acidic residues. A run of 7 repeats spans residues 2758–2761 (HDDT), 2762–2765 (HDDT), 2766–2769 (HDDT), 2770–2773 (HDDT), 2774–2777 (HDDT), 2778–2781 (HDDT), and 2782–2785 (HDDT). A 7 X 4 AA tandem repeats of H-D-D-T region spans residues 2758 to 2785 (HDDTHDDTHDDTHDDTHDDTHDDTHDDT). The helical transmembrane segment at 2806–2826 (LAGAVIIAMSVLSGFIIIVFK) threads the bilayer. Residues 2827–2867 (DKDEEEKDHNEHGYNEAFGEHDEYNMHDKEEVIEVCFNEED) are Cytoplasmic-facing.

It localises to the cell membrane. Involved in reticulocyte adhesion. Specifically binds to human reticulocyte cells. This is Reticulocyte-binding protein 2 (RBP-2) from Plasmodium vivax (strain Belem).